The chain runs to 53 residues: Photoreceptor disk component PRCD (53 aa).

C2 carries S-palmitoyl cysteine lipidation. The interval 24–53 (PEPSRVDGTVVGSGSDTDLQSTGREKGPVK) is disordered. Residues 35–45 (GSGSDTDLQST) show a composition bias toward polar residues.

The protein belongs to the PRCD family. In terms of assembly, interacts with RHO/rhodopsin; the interaction promotes PRCD stability. Post-translationally, palmitoylated at Cys-2. Palmitoylation is essential for protein stability and trafficking to the photoreceptor outer segment, but does not appear to be essential for membrane localization. Probably palmitoylated by ZDHHC3. In terms of processing, phosphorylated. Expressed in retina, where it localizes to both rod and cone photoreceptors (at protein level).

It localises to the cell projection. Its subcellular location is the cilium. The protein localises to the photoreceptor outer segment. It is found in the membrane. The protein resides in the endoplasmic reticulum. It localises to the golgi apparatus. Functionally, involved in vision. The sequence is that of Photoreceptor disk component PRCD from Mus musculus (Mouse).